Reading from the N-terminus, the 280-residue chain is Dermonecrotic toxin LgSicTox-alphaIA1 (280 aa).

His12 is a catalytic residue. The Mg(2+) site is built by Glu32 and Asp34. The active-site Nucleophile is the His48. Cys52 and Cys58 form a disulfide bridge. Asp92 is a Mg(2+) binding site.

This sequence belongs to the arthropod phospholipase D family. Class I subfamily. The cofactor is Mg(2+). Expressed by the venom gland.

It is found in the secreted. It carries out the reaction an N-(acyl)-sphingosylphosphocholine = an N-(acyl)-sphingosyl-1,3-cyclic phosphate + choline. The enzyme catalyses an N-(acyl)-sphingosylphosphoethanolamine = an N-(acyl)-sphingosyl-1,3-cyclic phosphate + ethanolamine. It catalyses the reaction a 1-acyl-sn-glycero-3-phosphocholine = a 1-acyl-sn-glycero-2,3-cyclic phosphate + choline. The catalysed reaction is a 1-acyl-sn-glycero-3-phosphoethanolamine = a 1-acyl-sn-glycero-2,3-cyclic phosphate + ethanolamine. Dermonecrotic toxins cleave the phosphodiester linkage between the phosphate and headgroup of certain phospholipids (sphingolipid and lysolipid substrates), forming an alcohol (often choline) and a cyclic phosphate. This toxin acts on sphingomyelin (SM). It may also act on ceramide phosphoethanolamine (CPE), lysophosphatidylcholine (LPC) and lysophosphatidylethanolamine (LPE), but not on lysophosphatidylserine (LPS), and lysophosphatidylglycerol (LPG). It acts by transphosphatidylation, releasing exclusively cyclic phosphate products as second products. Induces dermonecrosis, hemolysis, increased vascular permeability, edema, inflammatory response, and platelet aggregation. The chain is Dermonecrotic toxin LgSicTox-alphaIA1 from Loxosceles gaucho (Spider).